The primary structure comprises 274 residues: 2,3,4,5-tetrahydropyridine-2,6-dicarboxylate N-succinyltransferase (274 aa).

2 residues coordinate substrate: arginine 104 and aspartate 141.

It belongs to the transferase hexapeptide repeat family. Homotrimer.

It localises to the cytoplasm. It carries out the reaction (S)-2,3,4,5-tetrahydrodipicolinate + succinyl-CoA + H2O = (S)-2-succinylamino-6-oxoheptanedioate + CoA. The protein operates within amino-acid biosynthesis; L-lysine biosynthesis via DAP pathway; LL-2,6-diaminopimelate from (S)-tetrahydrodipicolinate (succinylase route): step 1/3. The sequence is that of 2,3,4,5-tetrahydropyridine-2,6-dicarboxylate N-succinyltransferase from Sodalis glossinidius (strain morsitans).